The sequence spans 271 residues: Putative phosphoenolpyruvate synthase regulatory protein (271 aa).

151 to 158 (GVSRSGKT) is an ADP binding site.

It belongs to the pyruvate, phosphate/water dikinase regulatory protein family. PSRP subfamily.

The catalysed reaction is [pyruvate, water dikinase] + ADP = [pyruvate, water dikinase]-phosphate + AMP + H(+). It catalyses the reaction [pyruvate, water dikinase]-phosphate + phosphate + H(+) = [pyruvate, water dikinase] + diphosphate. Functionally, bifunctional serine/threonine kinase and phosphorylase involved in the regulation of the phosphoenolpyruvate synthase (PEPS) by catalyzing its phosphorylation/dephosphorylation. The polypeptide is Putative phosphoenolpyruvate synthase regulatory protein (Burkholderia orbicola (strain MC0-3)).